Consider the following 338-residue polypeptide: Large ribosomal subunit protein uL3 (338 aa).

Disordered regions lie at residues M1–G44, A151–G170, V206–G259, and F312–G338. Residues S22 to P31 are compositionally biased toward polar residues. Positions G220–I237 are enriched in basic residues. Polar residues predominate over residues R247–G259.

Belongs to the universal ribosomal protein uL3 family. As to quaternary structure, part of the 50S ribosomal subunit. Forms a cluster with proteins L14 and L24e. Interacts weakly with protein L13.

In terms of biological role, one of the primary rRNA binding proteins, it binds directly near the 3'-end of the 23S rRNA, where it nucleates assembly of the 50S subunit. The protein is Large ribosomal subunit protein uL3 (rpl3) of Haloarcula marismortui (strain ATCC 43049 / DSM 3752 / JCM 8966 / VKM B-1809) (Halobacterium marismortui).